The sequence spans 153 residues: UPF0266 membrane protein SG1324 (153 aa).

The next 3 membrane-spanning stretches (helical) occupy residues 6–26 (IGLV…EFIV), 46–66 (LDGL…ITTD), and 68–88 (KVMT…LAYI).

This sequence belongs to the UPF0266 family.

It is found in the cell inner membrane. The chain is UPF0266 membrane protein SG1324 from Sodalis glossinidius (strain morsitans).